A 1558-amino-acid chain; its full sequence is Arginine-glutamic acid dipeptide repeats protein (1558 aa).

Basic and acidic residues predominate over residues 1 to 36; it reads MTADKDKDKDKEKDRDRDRDRERDKRDKARESENAR. The disordered stretch occupies residues 1 to 90; the sequence is MTADKDKDKD…KKKSRYERTD (90 aa). 2 positions are modified to phosphoserine: Ser53 and Ser56. The segment covering 74–85 has biased composition (basic residues); that stretch reads KSRKKPPKKKSR. A BAH domain is found at 103–283; the sequence is VVYRPGDCVY…PETRRLNSTQ (181 aa). The residue at position 120 (Thr120) is a Phosphothreonine. 2 positions are modified to phosphoserine: Ser142 and Ser304. Residues 284–387 enclose the ELM2 domain; that stretch reads GEIRVGPSHQ…KALQRLVKKP (104 aa). One can recognise an SANT domain in the interval 391-443; sequence LIEKCWTEDEVKRFVKGLRQYGKNFFRIRKELLPSKETGELITFYYYWKKTPE. The tract at residues 464-495 is disordered; the sequence is TRTASTPVNTPSRPPSSEFLDLSSASEDDFDS. Residues 465–474 show a composition bias toward polar residues; the sequence is RTASTPVNTP. The span at 479–488 shows a compositional bias: low complexity; the sequence is SSEFLDLSSA. The GATA-type zinc finger occupies 507-532; the sequence is CRHCFTTTSKDWHHGGRENILLCTDC. Residues 542–1125 form a disordered region; the sequence is LPPIEKPVDP…PSHASQSARF (584 aa). Lys560 participates in a covalent cross-link: Glycyl lysine isopeptide (Lys-Gly) (interchain with G-Cter in SUMO2). Phosphothreonine is present on Thr593. Ser594, Ser600, and Ser613 each carry phosphoserine. The segment covering 609–623 has biased composition (low complexity); that stretch reads SGRNSPSAASTSSND. The span at 624-640 shows a compositional bias: basic and acidic residues; sequence SKAETVKKSAKKVKEEA. A Glycyl lysine isopeptide (Lys-Gly) (interchain with G-Cter in SUMO2) cross-link involves residue Lys637. 4 positions are modified to phosphoserine: Ser642, Ser656, Ser675, and Ser679. A compositionally biased stretch (basic and acidic residues) spans 652–673; that stretch reads EKVASDTEDTDRITSKKTKTQE. The span at 688–708 shows a compositional bias: basic and acidic residues; the sequence is SDSRSVNDEGSSDPKDIDQDN. Polar residues predominate over residues 709–720; sequence RSTSPSIPSPQD. The span at 726–752 shows a compositional bias: low complexity; sequence DSSAQQQMLQAQPPALQAPSGAASAPS. The segment covering 778–792 has biased composition (polar residues); it reads SPATSQPPNQTQSTV. Residues 806 to 823 are compositionally biased toward pro residues; sequence LHPPRLPSPHPPLQPMTA. Low complexity-rich tracts occupy residues 824–857, 865–874, and 891–901; these read PPSQ…LLQH, GLPSQPSQGQ, and QLPASQSALQP. Residues 902-932 are compositionally biased toward pro residues; it reads QQPPREQPLPPAPLAMPHIKPPPTTPIPQLP. Low complexity predominate over residues 962-972; it reads KPLSSLSTHHP. The span at 1012 to 1023 shows a compositional bias: polar residues; sequence HPTTGLHQVPSQ. Positions 1027-1053 are enriched in pro residues; it reads PQHPFVPGGPPPITPPSCPPTSTPPAG. The span at 1054-1077 shows a compositional bias: low complexity; it reads PSSSSQPPCSAAVSSGGSVPGAPS. Residues Ser1098, Ser1105, and Ser1107 each carry the phosphoserine modification. The span at 1098 to 1109 shows a compositional bias: pro residues; it reads SPPPPPRSPSPE. At Thr1111 the chain carries Phosphothreonine. Residues 1148-1203 are a coiled coil; sequence GSKLAKKREEAIEKAKREAEQKAREEREREKEKEKEREREREREREAERAAKASSS. Lys1150 carries the post-translational modification N6-acetyllysine. The span at 1154–1198 shows a compositional bias: basic and acidic residues; sequence KREEAIEKAKREAEQKAREEREREKEKEKEREREREREREAERAA. Positions 1154-1238 are disordered; it reads KREEAIEKAK…TTIAAVPPYI (85 aa). At Tyr1251 the chain carries Phosphotyrosine. Ser1258 bears the Phosphoserine mark.

Interacts with HDAC1 and ATN1. Interaction with ATN1 is improved when the poly-Gln region of ATN1 is extended. Interacts with FAT1.

It localises to the nucleus. Its subcellular location is the PML body. Its function is as follows. Plays a role as a transcriptional repressor during development. May play a role in the control of cell survival. The chain is Arginine-glutamic acid dipeptide repeats protein (Rere) from Mus musculus (Mouse).